The following is a 313-amino-acid chain: MKLIRGIHNLSQAPQEGCVLTIGNFDGVHRGHRALLQGLQEEGRKRNLPVMVMLFEPQPLELFATDKAPARLTRLREKLRYLAECGVDYVLCVRFDRRFAALTAQNFISDLLVKHLRVKFLAVGDDFRFGAGREGDFLLLQKAGMEYGFDITSTQTFCEGGVRISSTAVRQALADDNLALAESLLGHPFAISGRVVHGDELGRTIGFPTANVPLRRQVSPVKGVYAVEVLGLGEKPLPGVANIGTRPTVAGIRQQLEVHLLDVAMDLYGRHIQVVLRKKIRNEQRFASLDELKAQIARDELTAREFFGLTKPA.

Belongs to the RibF family.

It catalyses the reaction riboflavin + ATP = FMN + ADP + H(+). It carries out the reaction FMN + ATP + H(+) = FAD + diphosphate. Its pathway is cofactor biosynthesis; FAD biosynthesis; FAD from FMN: step 1/1. The protein operates within cofactor biosynthesis; FMN biosynthesis; FMN from riboflavin (ATP route): step 1/1. In terms of biological role, catalyzes the phosphorylation of riboflavin to FMN followed by the adenylation of FMN to FAD. This chain is Bifunctional riboflavin kinase/FMN adenylyltransferase (ribF), found in Escherichia coli O157:H7.